We begin with the raw amino-acid sequence, 475 residues long: ATP synthase subunit beta, chloroplastic (475 aa).

155 to 162 (GGAGVGKT) is an ATP binding site.

It belongs to the ATPase alpha/beta chains family. As to quaternary structure, F-type ATPases have 2 components, CF(1) - the catalytic core - and CF(0) - the membrane proton channel. CF(1) has five subunits: alpha(3), beta(3), gamma(1), delta(1), epsilon(1). CF(0) has four main subunits: a(1), b(1), b'(1) and c(9-12).

Its subcellular location is the plastid. It localises to the chloroplast thylakoid membrane. It catalyses the reaction ATP + H2O + 4 H(+)(in) = ADP + phosphate + 5 H(+)(out). In terms of biological role, produces ATP from ADP in the presence of a proton gradient across the membrane. The catalytic sites are hosted primarily by the beta subunits. The polypeptide is ATP synthase subunit beta, chloroplastic (Guillardia theta (Cryptophyte)).